The following is a 148-amino-acid chain: Lysozyme-like protein 1 (148 aa).

Positions 1–19 (MKSVGVFALIISFSIVAES) are cleaved as a signal peptide. The C-type lysozyme domain occupies 20 to 148 (KIYTRCKLAK…SEWKRGCEVS (129 aa)). Disulfide bonds link Cys-25–Cys-145, Cys-49–Cys-133, Cys-83–Cys-98, and Cys-94–Cys-112. Glu-54 is a catalytic residue. Asn-58 carries an N-linked (GlcNAc...) asparagine glycan. Residue Asp-71 is part of the active site.

It belongs to the glycosyl hydrolase 22 family. As to quaternary structure, monomer.

It localises to the secreted. The enzyme catalyses Hydrolysis of (1-&gt;4)-beta-linkages between N-acetylmuramic acid and N-acetyl-D-glucosamine residues in a peptidoglycan and between N-acetyl-D-glucosamine residues in chitodextrins.. In Mus musculus (Mouse), this protein is Lysozyme-like protein 1 (Lyzl1).